Consider the following 277-residue polypeptide: Bifunctional protein FolD (277 aa).

Residues 164–166 (GRS), Ser-189, and Val-230 each bind NADP(+).

It belongs to the tetrahydrofolate dehydrogenase/cyclohydrolase family. In terms of assembly, homodimer.

The enzyme catalyses (6R)-5,10-methylene-5,6,7,8-tetrahydrofolate + NADP(+) = (6R)-5,10-methenyltetrahydrofolate + NADPH. The catalysed reaction is (6R)-5,10-methenyltetrahydrofolate + H2O = (6R)-10-formyltetrahydrofolate + H(+). It participates in one-carbon metabolism; tetrahydrofolate interconversion. Catalyzes the oxidation of 5,10-methylenetetrahydrofolate to 5,10-methenyltetrahydrofolate and then the hydrolysis of 5,10-methenyltetrahydrofolate to 10-formyltetrahydrofolate. This Exiguobacterium sibiricum (strain DSM 17290 / CCUG 55495 / CIP 109462 / JCM 13490 / 255-15) protein is Bifunctional protein FolD.